The primary structure comprises 623 residues: Phosphatidylinositol-3-phosphatase SAC1 (623 aa).

At 1 to 523 the chain is on the cytoplasmic side; that stretch reads MTGPIVYVQN…SPFPDRRPVY (523 aa). The 340-residue stretch at 115–454 folds into the SAC domain; the sequence is LELHLKNSTF…ADAVSVAYSG (340 aa). Residues Lys246 and Lys358 each participate in a glycyl lysine isopeptide (Lys-Gly) (interchain with G-Cter in ubiquitin) cross-link. The helical transmembrane segment at 524 to 544 threads the bilayer; it reads IQLIPMIICAALTVLGATIFF. Residues 545–552 are Lumenal-facing; it reads PKDRFTSS. The helical transmembrane segment at 553–573 threads the bilayer; that stretch reads KNLLYFAGASIVLALSTKFMF. Residues 574–623 lie on the Cytoplasmic side of the membrane; the sequence is KNGIQFVNWPKLVDVGFLVVHQTHDKEQQFKGLKYAQSPKFSKPDPLKRD.

Component of the SPOTS complex, at least composed of LCB1/2 (LCB1 and/or LCB2), ORM1/2 (ORM1 and/or ORM2), SAC1 and TSC3.

It is found in the endoplasmic reticulum membrane. Its subcellular location is the golgi apparatus membrane. The enzyme catalyses a 1,2-diacyl-sn-glycero-3-phospho-(1D-myo-inositol-3-phosphate) + H2O = a 1,2-diacyl-sn-glycero-3-phospho-(1D-myo-inositol) + phosphate. It carries out the reaction a 1,2-diacyl-sn-glycero-3-phospho-(1D-myo-inositol 4-phosphate) + H2O = a 1,2-diacyl-sn-glycero-3-phospho-(1D-myo-inositol) + phosphate. Phosphoinositide phosphatase which catalyzes the hydrolysis of phosphatidylinositol 3-phosphate (PtdIns(3)P) and phosphatidylinositol 4-phosphate (PtdIns(4)P). Has low activity towards phosphatidylinositol-3,5-bisphosphate (PtdIns(3,5)P2). May be involved in the coordination of the activities of the secretory pathway and the actin cytoskeleton. The protein is Phosphatidylinositol-3-phosphatase SAC1 (SAC1) of Saccharomyces cerevisiae (strain ATCC 204508 / S288c) (Baker's yeast).